The primary structure comprises 295 residues: Phosphoserine phosphatase, chloroplastic (295 aa).

The N-terminal 54 residues, 1 to 54, are a transit peptide targeting the chloroplast; it reads MEALTTSRVVPVQVPCRKLSSLFANFSCLELRRYPCRGLVSIMNHPKLLRPVTA. Residue Asp89 is the Nucleophile of the active site. Asp89 and Asp91 together coordinate Mg(2+). Asp91 functions as the Proton donor in the catalytic mechanism. Substrate-binding positions include Glu98, Arg134, 178–179, and Lys227; that span reads SG. Asp248 is a Mg(2+) binding site.

The protein belongs to the HAD-like hydrolase superfamily. SerB family. The cofactor is Mg(2+). In terms of tissue distribution, ubiquitous. Mainly expressed in shoot and root meristems, vasculature, pollen, anthers, carpels and seeds.

The protein localises to the plastid. It is found in the chloroplast. It catalyses the reaction O-phospho-L-serine + H2O = L-serine + phosphate. The enzyme catalyses O-phospho-D-serine + H2O = D-serine + phosphate. The protein operates within amino-acid biosynthesis; L-serine biosynthesis; L-serine from 3-phospho-D-glycerate: step 3/3. Approximately 60% inhibition of PSP activity is observed in presence of 10 mM serine. Its function is as follows. Catalyzes the last step in the plastidial phosphorylated pathway of serine biosynthesis (PPSB). The reaction mechanism proceeds via the formation of a phosphoryl-enzyme intermediates. Required for embryo, pollen and root development. May be required preferentially for serine biosynthesis in non-photosynthetic tissues. This Arabidopsis thaliana (Mouse-ear cress) protein is Phosphoserine phosphatase, chloroplastic (PSP).